Consider the following 123-residue polypeptide: PCNA-associated factor (123 aa).

Residues 1–123 (MVRTKADCAG…SEEAADSGDE (123 aa)) form a disordered region. A D-box motif is present at residues 26–37 (RKTFGSSSSGSN). Residues 66–77 (QKGIGDFFGSPS) carry the PIP-box motif. Residues 83 to 85 (KEN) carry the KEN box motif. The short motif at 93-105 (EAGGSGAGKKPRK) is the Initiation motif element. The span at 113 to 123 (PSEEAADSGDE) shows a compositional bias: acidic residues.

As to quaternary structure, interacts with pcna.

Its subcellular location is the nucleus. It is found in the cytoplasm. It localises to the perinuclear region. Functionally, PCNA-binding protein that acts as a regulator of DNA repair during DNA replication. Following DNA damage, the interaction with pcna is disrupted, facilitating the interaction between monoubiquitinated pcna and the translesion DNA synthesis DNA polymerase eta (polh) at stalled replisomes, facilitating the bypass of replication-fork-blocking lesions. Also acts as a regulator of centrosome number. The protein is PCNA-associated factor of Xenopus laevis (African clawed frog).